The chain runs to 325 residues: MLVISANEQRNLVNMNEVIEYAALALKEFSAERTITPIRDSLPFANEQNTALIMPSVAEGLEALGLKVVTVVPENKKIGKKTINGIVMLSDFQTGEPLALLEGSYLTMIRTGALSGVATKHLARHNAKTLCIIGTGEQAKGIAEAVFAVRDIEKVILYNRTEEKAYAFSQYIQEKFNKPAYVYTSANEAISEADIIATTTNASTPVFSKKLQKGVHVNAVGSFRPSMQELPSHAIANATKVVVESKEAALEETGDLQVPIQEGLFKSSDIHAELGQIISGEKAGRESDEEVTVFKSVGLAVVDIIVAKYLYERAVERGVGERIEF.

Belongs to the ornithine cyclodeaminase/mu-crystallin family.

It catalyses the reaction L-proline + NAD(+) = 1-pyrroline-2-carboxylate + NADH + H(+). It carries out the reaction L-proline + NADP(+) = 1-pyrroline-2-carboxylate + NADPH + H(+). Its function is as follows. Catalyzes the reduction of Delta(1)-pyrroline-2-carboxylate (Pyr2C) to L-proline, using preferentially NADPH over NADH as the electron donor. Is likely involved in a degradation pathway that converts trans-3-hydroxy-L-proline (t3LHyp) to L-proline. This is Delta(1)-pyrroline-2-carboxylate reductase from Bacillus cereus (strain ATCC 10987 / NRS 248).